The chain runs to 345 residues: MTEIRDDSISIALDAMGGDSAPDVVIEGANLVLSGVVPCDGKVHFSIYGKKEEVLPVLAKYKLVEANSVFVDVSDAVSSSDRPSYALRHRRRSSMWHAVEDLKKGLVSAVVSAGNTGALMAISRHLLGTIHSIDRPAIAVAMPSQKSSFVVLDIGANIECSADALLQFAIMGVAFAKAILGRTDPKVGLLNVGSEEVKGTYAVQEAFSLMRAAKSKMDFYGYIEAEEVFKGEVDVVVADGFSGNIMLKTTEAVANLLMSLFKGVVKSSITAKIAACMLKPSVRKTMELVDPKLYNGAMLVGLNGVVVKSHGSADGKAYACAIKTAVHSARYAIVSKIASEISEMG.

It belongs to the PlsX family. Homodimer. Probably interacts with PlsY.

Its subcellular location is the cytoplasm. The catalysed reaction is a fatty acyl-[ACP] + phosphate = an acyl phosphate + holo-[ACP]. It participates in lipid metabolism; phospholipid metabolism. In terms of biological role, catalyzes the reversible formation of acyl-phosphate (acyl-PO(4)) from acyl-[acyl-carrier-protein] (acyl-ACP). This enzyme utilizes acyl-ACP as fatty acyl donor, but not acyl-CoA. The polypeptide is Phosphate acyltransferase (Anaplasma phagocytophilum (strain HZ)).